A 387-amino-acid polypeptide reads, in one-letter code: MATTKSFLILIVMILATTSSTFASLEEMVTVLSIDGGGIKGIIPGTILEFLEGQLQKMDNNADARLADYFDVIGGTSTGGLLTSMITTPNENNRPFAAANEIVPFFFEHGPHIFNSSTGQFFGPKYDGKYLMQVLQENLGETRVHQALTEVAISSFDIKTNKPVIFTKSDLAKSPELDAKMYDICYSTAAAPTYFPPHYFTTNTINGDKYEFNLVDGAVATVADPALLSISVATRLAEKDPAFASIRSLNYKKMLLLSLGTGTTSEFDKTYTAEETAKWGAIQWMLVIQRMTDAASSYMTDYYLSTVFQAQNSQKNYLRVQENALTGTTTEMDDASEANMESLVQVGENLLKKPVSKDNPETYEEALKRFAKLLSDRKKLRANKASY.

The first 23 residues, 1-23, serve as a signal peptide directing secretion; sequence MATTKSFLILIVMILATTSSTFA. The 199-residue stretch at 32-230 folds into the PNPLA domain; that stretch reads LSIDGGGIKG…TVADPALLSI (199 aa). A GXGXXG motif is present at residues 36-41; that stretch reads GGGIKG. The GXSXG motif lies at 75 to 79; the sequence is GTSTG. Serine 77 acts as the Nucleophile in catalysis. Asparagine 115 carries N-linked (GlcNAc...) asparagine glycosylation. The active-site Proton acceptor is the aspartate 216. Positions 216–218 match the DGA/G motif; the sequence is DGA. Residues 361-385 are a coiled coil; it reads ETYEEALKRFAKLLSDRKKLRANKA.

This sequence belongs to the patatin family. As to expression, tuber.

The protein localises to the vacuole. Functionally, probable lipolytic acyl hydrolase (LAH), an activity which is thought to be involved in the response of tubers to pathogens. This Solanum tuberosum (Potato) protein is Patatin group D-2.